The chain runs to 231 residues: L-ribulose-5-phosphate 4-epimerase AraD (231 aa).

Substrate contacts are provided by residues 27–28, 44–45, and 74–75; these read GN, SG, and SS. Asp76, His95, and His97 together coordinate Zn(2+). Asp120 functions as the Proton donor/acceptor in the catalytic mechanism. Zn(2+) is bound at residue His171. Catalysis depends on Tyr229, which acts as the Proton donor/acceptor.

It belongs to the aldolase class II family. AraD/FucA subfamily. As to quaternary structure, homotetramer. It depends on Zn(2+) as a cofactor.

It carries out the reaction L-ribulose 5-phosphate = D-xylulose 5-phosphate. The protein operates within carbohydrate degradation; L-arabinose degradation via L-ribulose; D-xylulose 5-phosphate from L-arabinose (bacterial route): step 3/3. Inhibited by glycolohydroxamate at concentration above 0.1 mM. Functionally, involved in the degradation of L-arabinose. Catalyzes the interconversion of L-ribulose 5-phosphate (LRu5P) and D-xylulose 5-phosphate (D-Xu5P) via a retroaldol/aldol mechanism (carbon-carbon bond cleavage analogous to a class II aldolase reaction). The chain is L-ribulose-5-phosphate 4-epimerase AraD from Escherichia coli (strain K12).